A 632-amino-acid polypeptide reads, in one-letter code: Bifunctional protein GlmU (632 aa).

The pyrophosphorylase stretch occupies residues 1–229 (MAERELSVAI…PQEIVGVNDR (229 aa)). UDP-N-acetyl-alpha-D-glucosamine is bound by residues 11–14 (LAAG), lysine 25, glutamine 76, and 81–82 (GT). Aspartate 106 lines the Mg(2+) pocket. 4 residues coordinate UDP-N-acetyl-alpha-D-glucosamine: glycine 143, glutamate 158, asparagine 173, and asparagine 227. Asparagine 227 provides a ligand contact to Mg(2+). A linker region spans residues 230–250 (RQLAQAYQILQDRLKEAWMEA). Residues 251 to 632 (GVTFVDPDSS…ADNSRPKSLQ (382 aa)) are N-acetyltransferase. UDP-N-acetyl-alpha-D-glucosamine is bound by residues arginine 332 and lysine 350. Histidine 362 acts as the Proton acceptor in catalysis. Positions 365 and 376 each coordinate UDP-N-acetyl-alpha-D-glucosamine. Acetyl-CoA-binding positions include alanine 379, 385 to 386 (NY), alanine 422, and arginine 441. The segment at 600–632 (VAGDPCWPSPPPQPQQNQQTKPEADNSRPKSLQ) is disordered. Basic and acidic residues predominate over residues 621–632 (PEADNSRPKSLQ).

This sequence in the N-terminal section; belongs to the N-acetylglucosamine-1-phosphate uridyltransferase family. The protein in the C-terminal section; belongs to the transferase hexapeptide repeat family. Homotrimer. Mg(2+) serves as cofactor.

It is found in the cytoplasm. It carries out the reaction alpha-D-glucosamine 1-phosphate + acetyl-CoA = N-acetyl-alpha-D-glucosamine 1-phosphate + CoA + H(+). The catalysed reaction is N-acetyl-alpha-D-glucosamine 1-phosphate + UTP + H(+) = UDP-N-acetyl-alpha-D-glucosamine + diphosphate. It participates in nucleotide-sugar biosynthesis; UDP-N-acetyl-alpha-D-glucosamine biosynthesis; N-acetyl-alpha-D-glucosamine 1-phosphate from alpha-D-glucosamine 6-phosphate (route II): step 2/2. Its pathway is nucleotide-sugar biosynthesis; UDP-N-acetyl-alpha-D-glucosamine biosynthesis; UDP-N-acetyl-alpha-D-glucosamine from N-acetyl-alpha-D-glucosamine 1-phosphate: step 1/1. The protein operates within bacterial outer membrane biogenesis; LPS lipid A biosynthesis. In terms of biological role, catalyzes the last two sequential reactions in the de novo biosynthetic pathway for UDP-N-acetylglucosamine (UDP-GlcNAc). The C-terminal domain catalyzes the transfer of acetyl group from acetyl coenzyme A to glucosamine-1-phosphate (GlcN-1-P) to produce N-acetylglucosamine-1-phosphate (GlcNAc-1-P), which is converted into UDP-GlcNAc by the transfer of uridine 5-monophosphate (from uridine 5-triphosphate), a reaction catalyzed by the N-terminal domain. The protein is Bifunctional protein GlmU of Synechococcus sp. (strain JA-2-3B'a(2-13)) (Cyanobacteria bacterium Yellowstone B-Prime).